A 495-amino-acid polypeptide reads, in one-letter code: Aspartyl/glutamyl-tRNA(Asn/Gln) amidotransferase subunit B (495 aa).

It belongs to the GatB/GatE family. GatB subfamily. As to quaternary structure, heterotrimer of A, B and C subunits.

The catalysed reaction is L-glutamyl-tRNA(Gln) + L-glutamine + ATP + H2O = L-glutaminyl-tRNA(Gln) + L-glutamate + ADP + phosphate + H(+). The enzyme catalyses L-aspartyl-tRNA(Asn) + L-glutamine + ATP + H2O = L-asparaginyl-tRNA(Asn) + L-glutamate + ADP + phosphate + 2 H(+). Allows the formation of correctly charged Asn-tRNA(Asn) or Gln-tRNA(Gln) through the transamidation of misacylated Asp-tRNA(Asn) or Glu-tRNA(Gln) in organisms which lack either or both of asparaginyl-tRNA or glutaminyl-tRNA synthetases. The reaction takes place in the presence of glutamine and ATP through an activated phospho-Asp-tRNA(Asn) or phospho-Glu-tRNA(Gln). The chain is Aspartyl/glutamyl-tRNA(Asn/Gln) amidotransferase subunit B from Acinetobacter baylyi (strain ATCC 33305 / BD413 / ADP1).